Consider the following 465-residue polypeptide: E3 ubiquitin-protein ligase TRIM15 (465 aa).

The segment at 16–61 adopts an RING-type zinc-finger fold; the sequence is CTLCVGPLEDAVTAPCGHTFCRLCLPTLSQMGAQSSGKILLCPLCQ. The segment at 78-119 adopts a B box-type zinc-finger fold; the sequence is LGETYCEEHGEKIYFFCENDAEFLCVFCREGPTHQAHTVGFL. Zn(2+) contacts are provided by Cys83, His86, Cys105, and His111. Positions 126-229 form a coiled coil; that stretch reads YRDRLRSRLE…VKELEEKCQQ (104 aa). Residues 276–465 form the B30.2/SPRY domain; sequence EMMRMFSENL…KKGSCLTLKG (190 aa).

The protein belongs to the TRIM/RBCC family. As to quaternary structure, interacts with paxillin/PXN; this interaction recruits TRIM15 to focal adhesions. Interacts with TRIM8; this interaction prevents TRIM8 cytoplasmic translocation.

Its subcellular location is the cytoplasm. It is found in the nucleus. The protein localises to the cell junction. It localises to the focal adhesion. It carries out the reaction S-ubiquitinyl-[E2 ubiquitin-conjugating enzyme]-L-cysteine + [acceptor protein]-L-lysine = [E2 ubiquitin-conjugating enzyme]-L-cysteine + N(6)-ubiquitinyl-[acceptor protein]-L-lysine.. In terms of biological role, E3 ubiquitin ligase that plays a role in several processes including innate antiviral immnity, cell migration and chemotaxis. Acts as a 'Lys-63'-specific ubiquitin ligase for MAPK1/ERK2 and MAPK3/ERK1, promoting their activation by facilitating their interaction with MAP2K1 and MAP2K2. Also plays a role in cell migration and chemotaxis by acting as a stable focal adhesion component upon recruitment by multi-adapter protein paxillin/PXN. Functions in the RIGI-mediated interferon induction pathway upstream or at the level of MAVS. Inhibits NF-kappa-B activation by turnover of 'Lys-63'-linked ubiquitination of MAP3K7/TAK1. Mechanistically, prevents TRIM8 cytoplasmic translocation and thus inhibits TRIM8-mediated 'Lys-63'-linked polyubiquitination of MAP3K7/TAK1 in the cytoplasm. Also has an important regulatory effect on the activation of hepatic stellate cells (HSCs). The protein is E3 ubiquitin-protein ligase TRIM15 (TRIM15) of Macaca mulatta (Rhesus macaque).